Here is a 701-residue protein sequence, read N- to C-terminus: Elongation factor G (701 aa).

The tr-type G domain maps to 8–286 (DRVRNIGIIA…AVVLLLPSPL (279 aa)). Residues 17–24 (AHIDAGKT), 85–89 (DTPGH), and 139–142 (NKMD) contribute to the GTP site.

The protein belongs to the TRAFAC class translation factor GTPase superfamily. Classic translation factor GTPase family. EF-G/EF-2 subfamily.

It is found in the cytoplasm. Functionally, catalyzes the GTP-dependent ribosomal translocation step during translation elongation. During this step, the ribosome changes from the pre-translocational (PRE) to the post-translocational (POST) state as the newly formed A-site-bound peptidyl-tRNA and P-site-bound deacylated tRNA move to the P and E sites, respectively. Catalyzes the coordinated movement of the two tRNA molecules, the mRNA and conformational changes in the ribosome. The sequence is that of Elongation factor G from Herpetosiphon aurantiacus (strain ATCC 23779 / DSM 785 / 114-95).